The following is a 252-amino-acid chain: Type IV pilus assembly protein PilF (252 aa).

The signal sequence occupies residues 1–17 (MTVRAALVFLLAVGLTG). Cys-18 carries N-palmitoyl cysteine lipidation. Cys-18 carries the S-diacylglycerol cysteine lipid modification. TPR repeat units follow at residues 32–67 (GRDEARDAYIQLGLGYLQRGNTEQAKVPLRKALEID), 84–101 (EMEPKLADEEYRKALASD), 104–133 (NARVLNNYGGFLYEQKRYEEAYQRLLEASQ), 139–171 (ERSRVFENLGLVSLQMKKPAQAKEYFEKSLRLN), 174–203 (QPSVALEMADLLYKEREYVPARQYYDLFAQ), and 208–235 (NARSLLLGIRLAKVFEDRDTAASYGLQL).

As to quaternary structure, interacts with PilQ; this interaction is essential for assemby of PilQ into secretins.

Its subcellular location is the cell outer membrane. Its function is as follows. Essential component of the type IV pilus (T4P) that plays a role in surface and host cell adhesion, colonization, biofilm maturation, virulence, and twitching, a form of surface-associated motility facilitated by cycles of extension, adhesion, and retraction of T4P fibers. Plays an essential role in the outer membrane localization and assembly of PilQ into secretins which are dodecamers of PilQ. This Pseudomonas aeruginosa (strain ATCC 15692 / DSM 22644 / CIP 104116 / JCM 14847 / LMG 12228 / 1C / PRS 101 / PAO1) protein is Type IV pilus assembly protein PilF (pilF).